The following is a 185-amino-acid chain: MIVLRSRSPRRKYVLESLDLDFRIEPEDIDESSLKNEHPLEYLKRICLSKLGTRSKDEFLISCDTIVVQENSILQKPKNFLEAVEMLERLSGKTHKVASGLGIYYKGLERFAFEFSQVHFRSWNHKQIREYVEKYSPFDKAGSYGVQDKEGPVRSFDGSYTNILGFPIRTFFQYHEFWKKYLKGN.

The active-site Proton acceptor is the Asp64.

The protein belongs to the Maf family. YhdE subfamily. The cofactor is a divalent metal cation.

The protein resides in the cytoplasm. It catalyses the reaction dTTP + H2O = dTMP + diphosphate + H(+). The enzyme catalyses UTP + H2O = UMP + diphosphate + H(+). In terms of biological role, nucleoside triphosphate pyrophosphatase that hydrolyzes dTTP and UTP. May have a dual role in cell division arrest and in preventing the incorporation of modified nucleotides into cellular nucleic acids. The chain is dTTP/UTP pyrophosphatase from Leptospira borgpetersenii serovar Hardjo-bovis (strain JB197).